The primary structure comprises 785 residues: AP-1 complex subunit gamma-like 2 (785 aa).

The segment at 369-379 is essential for ubiquitin-binding; sequence LSLALVNSSNV. The tract at residues 592–617 is disordered; that stretch reads GPQADEEAKESKEAAQLSEAAPVPTE. The 116-residue stretch at 665 to 780 folds into the GAE domain; that stretch reads APIPDLKVFE…QEIFEVNNLP (116 aa).

Belongs to the adaptor complexes large subunit family. May interact with AP1S1/Sigma1A-adaptin and AP1S2/Sigma1B-adaptin. Probably does not interact with APB1. Interacts (via GAE domain) with RABEP1, NECAP1, CLINT1 and AFTPH/aftiphilin. In terms of assembly, (Microbial infection) Interacts with HBV major surface antigen L. Interacts with HBV core protein C in a ubiquitin-dependent manner. Expressed in all but one (skeletal muscle) tissues examined.

Its subcellular location is the golgi apparatus membrane. The protein resides in the cytoplasmic vesicle membrane. The protein localises to the endosome membrane. May function in protein sorting in late endosomes or multivesucular bodies (MVBs). In terms of biological role, (Microbial infection) Involved in MVB-assisted maturation of hepatitis B virus (HBV). In Homo sapiens (Human), this protein is AP-1 complex subunit gamma-like 2 (AP1G2).